A 185-amino-acid chain; its full sequence is Elongation factor P (185 aa).

Belongs to the elongation factor P family.

It is found in the cytoplasm. It functions in the pathway protein biosynthesis; polypeptide chain elongation. In terms of biological role, involved in peptide bond synthesis. Stimulates efficient translation and peptide-bond synthesis on native or reconstituted 70S ribosomes in vitro. Probably functions indirectly by altering the affinity of the ribosome for aminoacyl-tRNA, thus increasing their reactivity as acceptors for peptidyl transferase. The protein is Elongation factor P of Synechococcus sp. (strain JA-2-3B'a(2-13)) (Cyanobacteria bacterium Yellowstone B-Prime).